Reading from the N-terminus, the 1929-residue chain is MISYEPPPSAISNPTDPGGTTIIQGDGENDEEEDRDIVDAGFNPSVPGAPGQTDTQIARRLVKGKKTRRILSNKPQDFQIRIRVIEGRQLPGNNIKPVVKVSVGGQTHRTRIKRGNNPYFDEIFFYNVNMTPLELLDESVIFRLFNSGSIRADSLIGEFKLDVGYIYDEPGHAVMRKWVLLNDPDDSSSGAKGYLKVSMFVVGTGDEPPVEKRDREMEDDDVESNLLLPAGVALRWVTFFLKIYRAEDIPQMDDAFAQTVKEIFGADSDKKNLVDPFVEVSFAGKKVCTNRIEKNANPEWNQAVNLQIKFPSMCENIKLTVYDWDRLTKNDAVGTTCLSLSKIAASGGEIEEYDSTGTGSSSLEATTEKEVGFLPTFGPCYLNLYGSPREYTGFPDPYDDLNFGKGEGVAYRGRVLVELTTKLDNSSIKKIEDISSDDILVVEKYQRRRKYCLCAVFHSATMIQDIGEAIQFEVSIGNYGNKFDSTCKPLASTTQYSRPIFDGNYYYYLPWSFTKPVVTLTSYWEDISHRLDIVNILIAMTDRLQSNISTLKSAIQAKLPDVRLAEIWMRLIDQLIEDTMRPMPSLEGKANVTVLDKQRDKLRQTSLKYIQEAAIKMRGEATDVKATLTEIEDWLDRLQQLSEEPQNSMPDVIIWMIRAEKRLAYARVPAHQVLFSKTSEEACGKYCGKTQTVFLQYPLDKTKGLKIPTELRVNIWLGLSEVEKKFNSYSEGTFSVYAEMYENQALLLGKWGTTGLLKRHKFSDVTGSIKLKRESFLPPKGWEWEDDWKVDPERSLLTEADAGHTEFTDEIFENEARYPGGEWKKADETFTDANGEKSASPSDLSCPFGWIWDDDGWMRDINRAVDENGWEYGLTIPPDSKPKSWVAAEKMYHTNRRRRLVRKRKKDPKVSTTSKAALTPQEQEGWEYAALIGWKFHITPRSSDTFRRRRWRRKMAPSDQHGAAAIFKLEGALGTDMTEDEEKKGSEKQTATNVFGANTPIVSCTFDKFYTYHLRCYIYQARGLTPLDKDSFSDPYAHVSFLHRSKTTETIRSTLNPTWDQTLIFNTIDIYGDPHAVAQNPPNVVIEIFDYDQVGKDEFLGRSVCMPMVKLNPEVDIAPKLLWYPVMNSNKHCGDLLLAAELIIREKDGSNLPILPSQRAPQIYMVPQGIRPVVQLTAIEILTWGLRNMKSYQLASVTSPSLIVECGGEIVETAVIKNLKKTPNFYSSVLFMKVLLPKDEMYVPPIIIKIVDHRPFGRKPVVGQCTIECLEEFRCDPYLTKHEDAPELRVARLTSSPLRDVVIEVEDTKPLLANQLQEKEEEVVDWWSKYYASTGETEKCGQYIQKGYTTLKVYKCELENVSEFRGLTDFCDTFKLYRGKAEDSDDPSVVGEFKGSFRIYPLPDDPNIPYPPRQFLELPGTESQECIVRIYIVRGIDLQPKDNNGLCDPYIKITLNKKVIEDRDHYIPNTLNPLFGRMYELSCFLPQEKDLKISVYDYDTLTRDEKVGETTIDLENRFLSRFGSHCGLPQTYCISGINQWRDQLTPTQILQNFARLKSSPPPVFSDNGTRLTFSSKDYTLEEFENNRKIHQHLGPPNERLALYVLRTQGLVPEHVETRTLYSTFQPNISQGKLEMWVDVFPKSLGPPGPPFNITPRKAKKYVLRVIVWNTKDVILDEKSITGEEMSDIYVKGWIPGNEENKQKTDVHYRSLDGEGNFNWRFVFPFEYLPAEQLCIVSKKEHFWSLDKTEFKLPPKLILQIWDNDKFSLDDYLGFVELDLHRTTIPAKVPEKCSFNLLDQDKHSKVASLFEQKSMKGWWPCHAEKDGKRILAGKIEMTLEVLNEKDAEERPAGKGRDEPNMNPKLDPPNRPDTSFLWFTNPCKTMKFIIWRRFKWVFIGLIILLLVLLFLGVFFYSLPGYVSMKIVKPNL.

The segment at 1–53 (MISYEPPPSAISNPTDPGGTTIIQGDGENDEEEDRDIVDAGFNPSVPGAPGQT) is disordered. Residues 27–36 (GENDEEEDRD) show a composition bias toward acidic residues. C2 domains follow at residues 62–179 (VKGK…RKWV) and 218–354 (EDDD…EEYD). Ca(2+) contacts are provided by Asp267, Asp275, Asp323, Asp325, and Asp331. Over residues 898-907 (RRLVRKRKKD) the composition is skewed to basic residues. The disordered stretch occupies residues 898–918 (RRLVRKRKKDPKVSTTSKAAL). C2 domains follow at residues 996-1124 (GANT…LLWY), 1159-1283 (RAPQ…TKHE), 1408-1527 (IPYP…SHCG), and 1645-1793 (GPPG…EKCS). Ca(2+) is bound by residues Asp1028, Asp1034, Asp1090, and Asp1092. Ca(2+) is bound by residues Asp1442, Asp1448, Asp1497, Asp1499, Asp1764, Ser1767, and Asp1770. The span at 1845–1858 (DAEERPAGKGRDEP) shows a compositional bias: basic and acidic residues. The tract at residues 1845–1867 (DAEERPAGKGRDEPNMNPKLDPP) is disordered. A helical membrane pass occupies residues 1894 to 1914 (WVFIGLIILLLVLLFLGVFFY).

This sequence belongs to the ferlin family. It depends on Ca(2+) as a cofactor.

It is found in the cell membrane. The protein localises to the nucleus membrane. It localises to the cytoplasmic vesicle membrane. May play a role in membrane regeneration and repair. This is Myoferlin (myof) from Xenopus tropicalis (Western clawed frog).